The sequence spans 98 residues: Plastocyanin (98 aa).

In terms of domain architecture, Plastocyanin-like spans 1-98 (AAIVKLGGDD…AGMKMTITVQ (98 aa)). Cu cation is bound by residues histidine 38, cysteine 83, histidine 86, and methionine 91.

The protein belongs to the plastocyanin family. Requires Cu(2+) as cofactor.

It localises to the plastid. The protein resides in the chloroplast thylakoid membrane. Participates in electron transfer between P700 and the cytochrome b6-f complex in photosystem I. This Ulva prolifera (Green seaweed) protein is Plastocyanin (PETE).